The sequence spans 436 residues: Antilisterial bacteriocin subtilosin biosynthesis protein AlbD (436 aa).

The next 10 membrane-spanning stretches (helical) occupy residues 27 to 47 (IAAG…QAGI), 55 to 75 (TYII…SVTS), 113 to 133 (LFFF…GAQT), 134 to 154 (LFWL…GVVL), 164 to 184 (LMFL…ALMP), 187 to 207 (TIPL…PVFL), 240 to 260 (AMLL…FQMM), 270 to 290 (IYIV…LYSI), 315 to 335 (FYSG…GFIS), and 395 to 415 (AILA…LVIV).

The protein resides in the cell membrane. Its function is as follows. Involved in the production of the bacteriocin subtilosin. Required for immunity to subtilosin. In Bacillus subtilis (strain 168), this protein is Antilisterial bacteriocin subtilosin biosynthesis protein AlbD (albD).